We begin with the raw amino-acid sequence, 122 residues long: Large ribosomal subunit protein uL14 (122 aa).

It belongs to the universal ribosomal protein uL14 family. As to quaternary structure, part of the 50S ribosomal subunit. Forms a cluster with proteins L3 and L19. In the 70S ribosome, L14 and L19 interact and together make contacts with the 16S rRNA in bridges B5 and B8.

In terms of biological role, binds to 23S rRNA. Forms part of two intersubunit bridges in the 70S ribosome. The chain is Large ribosomal subunit protein uL14 from Erythrobacter litoralis (strain HTCC2594).